Here is a 410-residue protein sequence, read N- to C-terminus: Argininosuccinate synthase (410 aa).

ATP-binding positions include 13–21 and Ala-40; that span reads AYSGGLDTS. Residues Tyr-91 and Ser-96 each contribute to the L-citrulline site. ATP is bound at residue Gly-121. Residues Thr-123, Asn-127, and Asp-128 each contribute to the L-aspartate site. Asn-127 lines the L-citrulline pocket. Residues Arg-131, Ser-182, Ser-191, Glu-267, and Tyr-279 each contribute to the L-citrulline site.

It belongs to the argininosuccinate synthase family. Type 1 subfamily. In terms of assembly, homotetramer.

The protein resides in the cytoplasm. The catalysed reaction is L-citrulline + L-aspartate + ATP = 2-(N(omega)-L-arginino)succinate + AMP + diphosphate + H(+). Its pathway is amino-acid biosynthesis; L-arginine biosynthesis; L-arginine from L-ornithine and carbamoyl phosphate: step 2/3. In Maricaulis maris (strain MCS10) (Caulobacter maris), this protein is Argininosuccinate synthase.